Consider the following 29-residue polypeptide: Ranatuerin-2SEa (29 aa).

An intrachain disulfide couples cysteine 23 to cysteine 29.

In terms of tissue distribution, expressed by the skin glands.

It is found in the secreted. Its function is as follows. Mast cell degranulating peptide. Causes histamine release from rat peritoneal mast cells in vitro. Has antibacterial activity against the Gram-negative bacterium E.coli K12 and Gram-positive bacterium M.luteus NCT C2665. The protein is Ranatuerin-2SEa of Lithobates sevosus (Dusky gopher frog).